We begin with the raw amino-acid sequence, 352 residues long: UDP-3-O-acylglucosamine N-acyltransferase (352 aa).

H244 serves as the catalytic Proton acceptor.

It belongs to the transferase hexapeptide repeat family. LpxD subfamily. As to quaternary structure, homotrimer.

The enzyme catalyses a UDP-3-O-[(3R)-3-hydroxyacyl]-alpha-D-glucosamine + a (3R)-hydroxyacyl-[ACP] = a UDP-2-N,3-O-bis[(3R)-3-hydroxyacyl]-alpha-D-glucosamine + holo-[ACP] + H(+). It participates in bacterial outer membrane biogenesis; LPS lipid A biosynthesis. Its function is as follows. Catalyzes the N-acylation of UDP-3-O-acylglucosamine using 3-hydroxyacyl-ACP as the acyl donor. Is involved in the biosynthesis of lipid A, a phosphorylated glycolipid that anchors the lipopolysaccharide to the outer membrane of the cell. The sequence is that of UDP-3-O-acylglucosamine N-acyltransferase from Leptospira biflexa serovar Patoc (strain Patoc 1 / Ames).